The following is a 394-amino-acid chain: Lipid-A-disaccharide synthase (394 aa).

The protein belongs to the LpxB family.

It catalyses the reaction 2-N,3-O-bis[(3R)-3-hydroxytetradecanoyl]-alpha-D-glucosaminyl 1-phosphate + UDP-2-N,3-O-bis[(3R)-3-hydroxytetradecanoyl]-alpha-D-glucosamine = lipid A disaccharide (E. coli) + UDP + H(+). The catalysed reaction is a lipid X + a UDP-2-N,3-O-bis[(3R)-3-hydroxyacyl]-alpha-D-glucosamine = a lipid A disaccharide + UDP + H(+). Its pathway is glycolipid biosynthesis; lipid IV(A) biosynthesis; lipid IV(A) from (3R)-3-hydroxytetradecanoyl-[acyl-carrier-protein] and UDP-N-acetyl-alpha-D-glucosamine: step 5/6. In terms of biological role, condensation of UDP-2,3-diacylglucosamine and 2,3-diacylglucosamine-1-phosphate to form lipid A disaccharide, a precursor of lipid A, a phosphorylated glycolipid that anchors the lipopolysaccharide to the outer membrane of the cell. The polypeptide is Lipid-A-disaccharide synthase (Yersinia pestis).